The sequence spans 248 residues: DNA repair protein RecO (248 aa).

It belongs to the RecO family.

Involved in DNA repair and RecF pathway recombination. The chain is DNA repair protein RecO from Streptomyces avermitilis (strain ATCC 31267 / DSM 46492 / JCM 5070 / NBRC 14893 / NCIMB 12804 / NRRL 8165 / MA-4680).